A 182-amino-acid chain; its full sequence is Inner membrane-spanning protein YciB (182 aa).

The next 5 helical transmembrane spans lie at 22–42 (IYIA…VTYA), 50–70 (MHLI…IFHD), 72–92 (AFIK…LAVS), 118–138 (VTWY…YVAF), and 148–168 (FKVF…VVYL).

This sequence belongs to the YciB family.

It is found in the cell inner membrane. Plays a role in cell envelope biogenesis, maintenance of cell envelope integrity and membrane homeostasis. In Shewanella woodyi (strain ATCC 51908 / MS32), this protein is Inner membrane-spanning protein YciB.